The chain runs to 305 residues: Protoheme IX farnesyltransferase (305 aa).

The next 9 helical transmembrane spans lie at 31 to 51 (VMSL…YSVH), 52 to 72 (PFIA…AGAI), 96 to 118 (VIES…FFMA), 122 to 144 (NLLA…TIWL), 151 to 171 (NIVI…AAVS), 180 to 200 (ILFL…ALFC), 225 to 245 (ILIY…IGMN), 247 to 267 (FIYL…AGSL), and 281 to 301 (FAYS…TNTI).

Belongs to the UbiA prenyltransferase family. Protoheme IX farnesyltransferase subfamily.

It is found in the cell inner membrane. The enzyme catalyses heme b + (2E,6E)-farnesyl diphosphate + H2O = Fe(II)-heme o + diphosphate. It functions in the pathway porphyrin-containing compound metabolism; heme O biosynthesis; heme O from protoheme: step 1/1. Converts heme B (protoheme IX) to heme O by substitution of the vinyl group on carbon 2 of heme B porphyrin ring with a hydroxyethyl farnesyl side group. This Rickettsia peacockii (strain Rustic) protein is Protoheme IX farnesyltransferase.